A 265-amino-acid polypeptide reads, in one-letter code: Adenosylcobinamide-GDP ribazoletransferase (265 aa).

The next 4 membrane-spanning stretches (helical) occupy residues 51–71, 72–92, 121–140, and 203–223; these read LVGV…QLIF, PDSV…GAFH, IGTY…FVLW, and VASL…LFAF.

This sequence belongs to the CobS family. The cofactor is Mg(2+).

Its subcellular location is the cell inner membrane. It catalyses the reaction alpha-ribazole + adenosylcob(III)inamide-GDP = adenosylcob(III)alamin + GMP + H(+). The enzyme catalyses alpha-ribazole 5'-phosphate + adenosylcob(III)inamide-GDP = adenosylcob(III)alamin 5'-phosphate + GMP + H(+). The protein operates within cofactor biosynthesis; adenosylcobalamin biosynthesis; adenosylcobalamin from cob(II)yrinate a,c-diamide: step 7/7. Functionally, joins adenosylcobinamide-GDP and alpha-ribazole to generate adenosylcobalamin (Ado-cobalamin). Also synthesizes adenosylcobalamin 5'-phosphate from adenosylcobinamide-GDP and alpha-ribazole 5'-phosphate. This Vibrio parahaemolyticus serotype O3:K6 (strain RIMD 2210633) protein is Adenosylcobinamide-GDP ribazoletransferase.